Reading from the N-terminus, the 354-residue chain is Guanine nucleotide-binding protein G(t) subunit alpha-2 (354 aa).

Positions 1–27 (MGSGASAEDKELAKRSKELEKKLQEDA) are disordered. The N-myristoyl glycine moiety is linked to residue glycine 2. The span at 7 to 27 (AEDKELAKRSKELEKKLQEDA) shows a compositional bias: basic and acidic residues. The G-alpha domain occupies 32-354 (KTVKLLLLGA…KENLKDCGLF (323 aa)). The interval 35 to 48 (KLLLLGAGESGKST) is G1 motif. Residues 40–47 (GAGESGKS), 175–181 (LRSRVKT), 200–204 (DVGGQ), 269–272 (NKKD), and alanine 326 contribute to the GTP site. Serine 47 serves as a coordination point for Mg(2+). Positions 173–181 (DVLRSRVKT) are G2 motif. Residue arginine 178 is modified to ADP-ribosylarginine; by cholera toxin. Mg(2+) is bound at residue threonine 181. The G3 motif stretch occupies residues 196-205 (FRMFDVGGQR). The interval 265–272 (VLFLNKKD) is G4 motif. Residues 324 to 329 (TCATDT) form a G5 motif region. Position 351 is an ADP-ribosylcysteine; by pertussis toxin (cysteine 351).

It belongs to the G-alpha family. G(i/o/t/z) subfamily. As to quaternary structure, g proteins are composed of 3 units; alpha, beta and gamma. The alpha chain contains the guanine nucleotide binding site. As to expression, retinal rod outer segment.

Its subcellular location is the cell projection. The protein resides in the cilium. It localises to the photoreceptor outer segment. It is found in the photoreceptor inner segment. Functionally, guanine nucleotide-binding proteins (G proteins) are involved as modulators or transducers in various transmembrane signaling systems. Transducin is an amplifier and one of the transducers of a visual impulse that performs the coupling between rhodopsin and cGMP-phosphodiesterase. This chain is Guanine nucleotide-binding protein G(t) subunit alpha-2 (GNAT2), found in Homo sapiens (Human).